Here is a 260-residue protein sequence, read N- to C-terminus: MALRRPMVAGNWKMNGSAQLAQELFKKFATKLQNDSAEVVLCPPSIYLESVRQLLDENKEALNGCLVRMGTQNVSQHDFGAYTGEISGQMLKDSGCRYVIIGHSERRRMYGETSDIVAEKFAAAQKHGLTPILCVGESGPAREARRTFEVIAEELDVVIEKNGTMAFDNAIIAYEPLWAVGTGKSATPEQAQEVHAFIRKRLSEVSPFIGENIRILYGGSVTPSNAADLFAQPDVDGGLIGGVSLNATEFLSLCTIAMSA.

11 to 13 (NWK) is a binding site for substrate. The active-site Electrophile is the H103. E175 acts as the Proton acceptor in catalysis. Substrate contacts are provided by residues G181, S220, and 241–242 (GG).

The protein belongs to the triosephosphate isomerase family. In terms of assembly, homodimer.

The protein localises to the cytoplasm. It catalyses the reaction D-glyceraldehyde 3-phosphate = dihydroxyacetone phosphate. It participates in carbohydrate biosynthesis; gluconeogenesis. It functions in the pathway carbohydrate degradation; glycolysis; D-glyceraldehyde 3-phosphate from glycerone phosphate: step 1/1. Involved in the gluconeogenesis. Catalyzes stereospecifically the conversion of dihydroxyacetone phosphate (DHAP) to D-glyceraldehyde-3-phosphate (G3P). This is Triosephosphate isomerase from Shewanella piezotolerans (strain WP3 / JCM 13877).